The sequence spans 955 residues: Glycine dehydrogenase (decarboxylating) (955 aa).

Residue lysine 705 is modified to N6-(pyridoxal phosphate)lysine.

The protein belongs to the GcvP family. In terms of assembly, the glycine cleavage system is composed of four proteins: P, T, L and H. Requires pyridoxal 5'-phosphate as cofactor.

The catalysed reaction is N(6)-[(R)-lipoyl]-L-lysyl-[glycine-cleavage complex H protein] + glycine + H(+) = N(6)-[(R)-S(8)-aminomethyldihydrolipoyl]-L-lysyl-[glycine-cleavage complex H protein] + CO2. In terms of biological role, the glycine cleavage system catalyzes the degradation of glycine. The P protein binds the alpha-amino group of glycine through its pyridoxal phosphate cofactor; CO(2) is released and the remaining methylamine moiety is then transferred to the lipoamide cofactor of the H protein. The protein is Glycine dehydrogenase (decarboxylating) of Aliivibrio fischeri (strain ATCC 700601 / ES114) (Vibrio fischeri).